Consider the following 412-residue polypeptide: MTKELIKTEASDHVIQPNNEQFSILEQLKKQQEELLQKQRELFLQDQLAHHQQQQQQQQQQLQFQQQNQLQPANNWTFTQGLVLGQISVIFIIIVFVKFFVFADSSTIPTKKSSIDASGIIVKRNKLTKKDGTSDDIIEDEKLLDTRHKISTILEKTYYDVNNHSPESLDWFNVLVAQTISQLRSEALLGDNIYHSLNDFLENTNIPEFIDKINLTEIDIGDDFPIFSNCRIKYGEDLGRLEAKIDVDLSDTLTLGISTKLLLNQPRPLTAILPVSLAVSIVRFSGCLTVSLINTKDIDLKNIEKDGQENDGSNNENEDGGGTALMFSFSPDYRLEFVVKSLIGSRAKLQDVPKISSLIESKLRTWFIERCVEPRFQVVRLPSLWPRTKNTREPINKKTSVSRSDSGTSENL.

Residues 1-81 are Lumenal-facing; that stretch reads MTKELIKTEA…PANNWTFTQG (81 aa). Residues 82–102 form a helical membrane-spanning segment; it reads LVLGQISVIFIIIVFVKFFVF. The Cytoplasmic segment spans residues 103-412; the sequence is ADSSTIPTKK…RSDSGTSENL (310 aa). In terms of domain architecture, SMP-LTD spans 165–382; that stretch reads SPESLDWFNV…EPRFQVVRLP (218 aa). The segment at 389-412 is disordered; sequence KNTREPINKKTSVSRSDSGTSENL. The span at 397–412 shows a compositional bias: polar residues; the sequence is KKTSVSRSDSGTSENL.

It belongs to the MMM1 family. In terms of assembly, homodimer. Component of the ER-mitochondria encounter structure (ERMES) or MDM complex, composed of MMM1, MDM10, MDM12 and MDM34. An MMM1 homodimer associates with one molecule of MDM12 on each side in a pairwise head-to-tail manner, and the SMP-LTD domains of MMM1 and MDM12 generate a continuous hydrophobic tunnel for phospholipid trafficking.

It is found in the endoplasmic reticulum membrane. In terms of biological role, component of the ERMES/MDM complex, which serves as a molecular tether to connect the endoplasmic reticulum (ER) and mitochondria. Components of this complex are involved in the control of mitochondrial shape and protein biogenesis, and function in nonvesicular lipid trafficking between the ER and mitochondria. The MDM12-MMM1 subcomplex functions in the major beta-barrel assembly pathway that is responsible for biogenesis of all outer membrane beta-barrel proteins, and acts in a late step after the SAM complex. The MDM10-MDM12-MMM1 subcomplex further acts in the TOM40-specific pathway after the action of the MDM12-MMM1 complex. Essential for establishing and maintaining the structure of mitochondria and maintenance of mtDNA nucleoids. The sequence is that of Maintenance of mitochondrial morphology protein 1 from Candida tropicalis (strain ATCC MYA-3404 / T1) (Yeast).